Reading from the N-terminus, the 268-residue chain is Magnesium dechelatase SGR1, chloroplastic (268 aa).

The transit peptide at methionine 1–valine 48 directs the protein to the chloroplast.

It belongs to the staygreen family. Interacts with HCAR, the chlorophyll catabolic enzymes (CCEs) NYC1, PAO and RCCR, and the LHCII complex. Part of a SGR1-CCE-LHCII complex, which acts in chlorophyll breakdown. As to expression, expressed in roots, leaves, seeds, flowers, buds, petals, sepals and siliques.

Its subcellular location is the plastid. The protein localises to the chloroplast thylakoid membrane. The enzyme catalyses chlorophyll a + 2 H(+) = pheophytin a + Mg(2+). Functionally, magnesium chelatase involved in chlorophyll a degradation in the chlorophyll-protein complexes of photosystem I (PSI) and photosystem II (PSII). Contributes to the degradation of PSI and PSII in the thylakoid membranes. Required to trigger chlorophyll degradation during natural and dark-induced leaf senescence. Mediates chlorophyll degradation during embryo degreening. Recombinant SGR1 possesses high dechelating activity against chlorophyll a, very low activity against chlorophyllide a, and no activity against chlorophyll b. Magnesium dechelation of chlorophyll a by SGR1 activates chlorophyll b degradation by inducing the expression of NYC1, an enzyme involved in chlorophyll b degradation. The sequence is that of Magnesium dechelatase SGR1, chloroplastic from Arabidopsis thaliana (Mouse-ear cress).